Here is a 321-residue protein sequence, read N- to C-terminus: tRNA(Ile)-lysidine synthase (321 aa).

Residue 30 to 35 participates in ATP binding; the sequence is SGGSDS.

The protein belongs to the tRNA(Ile)-lysidine synthase family.

It localises to the cytoplasm. It carries out the reaction cytidine(34) in tRNA(Ile2) + L-lysine + ATP = lysidine(34) in tRNA(Ile2) + AMP + diphosphate + H(+). Functionally, ligates lysine onto the cytidine present at position 34 of the AUA codon-specific tRNA(Ile) that contains the anticodon CAU, in an ATP-dependent manner. Cytidine is converted to lysidine, thus changing the amino acid specificity of the tRNA from methionine to isoleucine. The chain is tRNA(Ile)-lysidine synthase from Chlamydia trachomatis serovar A (strain ATCC VR-571B / DSM 19440 / HAR-13).